Consider the following 377-residue polypeptide: MSKRDYYEVLGVSRDTSEREIKKAYKRLAMKFHPDRNPGDKTAEANFKEIKEAYEILTDADKKAAYDQFGHAGVDPNRGGGGYGGGQGDFGDIFGDVFGDIFGGGRRGGQRQAARGSDLRYNLELSLEEAVKGLTKELRIPTLATCDLCEGSGAKKGTSATTCGTCHGQGQVQMRQGFFAVQQPCPTCHGRGKIIKDPCSKCHGDGRVEKSKTLSVKIPAGVDTGDRIRLAGEGEAGEFGAPPGDLYVQVSVREHAIFVRDGNNLYCEVPISFSKAALGGEIEVPTLDGKVSLKIPAETQTGRMFRLRGKGVKSVRSHAVGDLLCKVVMETPVNLNDRQKELLREFEATLTGESKKHSPKAEGFFDGVKKFFQDLNS.

One can recognise a J domain in the interval 5 to 70 (DYYEVLGVSR…DKKAAYDQFG (66 aa)). Residues 133-211 (GLTKELRIPT…CHGDGRVEKS (79 aa)) form a CR-type zinc finger. Residues C146, C149, C163, C166, C185, C188, C199, and C202 each coordinate Zn(2+). CXXCXGXG motif repeat units follow at residues 146 to 153 (CDLCEGSG), 163 to 170 (CGTCHGQG), 185 to 192 (CPTCHGRG), and 199 to 206 (CSKCHGDG).

The protein belongs to the DnaJ family. In terms of assembly, homodimer. The cofactor is Zn(2+).

It localises to the cytoplasm. Participates actively in the response to hyperosmotic and heat shock by preventing the aggregation of stress-denatured proteins and by disaggregating proteins, also in an autonomous, DnaK-independent fashion. Unfolded proteins bind initially to DnaJ; upon interaction with the DnaJ-bound protein, DnaK hydrolyzes its bound ATP, resulting in the formation of a stable complex. GrpE releases ADP from DnaK; ATP binding to DnaK triggers the release of the substrate protein, thus completing the reaction cycle. Several rounds of ATP-dependent interactions between DnaJ, DnaK and GrpE are required for fully efficient folding. Also involved, together with DnaK and GrpE, in the DNA replication of plasmids through activation of initiation proteins. The sequence is that of Chaperone protein DnaJ from Shewanella baltica (strain OS195).